The following is a 748-amino-acid chain: Antigen peptide transporter 1 (748 aa).

Over 1–15 (MASSRCPAPRGCRCL) the chain is Cytoplasmic. The chain crosses the membrane as a helical span at residues 16 to 36 (PGASLAWLGTVLLLLADWVLL). At 37–53 (RTALPRIFSLLVPTALP) the chain is on the lumenal side. Residues 54 to 76 (LLRVWAVGLSRWAVLWLGACGVL) form a helical membrane-spanning segment. Residues 77–92 (RATVGSKSENAGAQGW) lie on the Cytoplasmic side of the membrane. A helical transmembrane segment spans residues 93–113 (LAALKPLAAALGLALPGLALF). Over 114-133 (RELISWGAPGSADSTRLLHW) the chain is Lumenal. The helical transmembrane segment at 134–154 (GSHPTAFVVSYAAALPAAALW) threads the bilayer. Over 155–186 (HKLGSLWVPGGQGGSGNPVRRLLGCLGSETRR) the chain is Cytoplasmic. The chain crosses the membrane as a helical span at residues 187-207 (LSLFLVLVVLSSLGEMAIPFF). Residues 187–470 (LSLFLVLVVL…LLSIYPRVQK (284 aa)) form the ABC transmembrane type-1 domain. Residues 208–227 (TGRLTDWILQDGSADTFTRN) lie on the Lumenal side of the membrane. A helical transmembrane segment spans residues 228-248 (LTLMSILTIASAVLEFVGDGI). The Cytoplasmic portion of the chain corresponds to 249–298 (YNNTMGHVHSHLQGEVFGAVLRQETEFFQQNQTGNIMSRVTEDTSTLSDS). The chain crosses the membrane as a helical span at residues 299-319 (LSENLSLFLWYLVRGLCLLGI). The Lumenal segment spans residues 320–328 (MLWGSVSLT). Residues 329–349 (MVTLITLPLLFLLPKKVGKWY) form a helical membrane-spanning segment. Residues 350 to 418 (QLLEVQVRES…AVNSWTTSIS (69 aa)) are Cytoplasmic-facing. The tract at residues 375 to 420 (PTVRSFANEEGEAQKFREKLQEIKTLNQKEAVAYAVNSWTTSISGM) is part of the peptide-binding site. Residues 419 to 439 (GMLLKVGILYIGGQLVTSGAV) traverse the membrane as a helical segment. At 440 to 443 (SSGN) the chain is on the lumenal side. The helical transmembrane segment at 444-464 (LVTFVLYQMQFTQAVEVLLSI) threads the bilayer. The tract at residues 453-487 (QFTQAVEVLLSIYPRVQKAVGSSEKIFEYLDRTPR) is part of the peptide-binding site. Topologically, residues 465 to 748 (YPRVQKAVGS…MVQAPADAPE (284 aa)) are cytoplasmic. One can recognise an ABC transporter domain in the interval 503–742 (VQFQDVSFAY…KGCYWAMVQA (240 aa)). ATP-binding positions include 538 to 546 (GPNGSGKST), 641 to 647 (SQLSGGQ), and Gln701. Ser545 is a binding site for Mg(2+).

This sequence belongs to the ABC transporter superfamily. ABCB family. MHC peptide exporter (TC 3.A.1.209) subfamily. In terms of assembly, heterodimer of TAP1 and TAP2 (TAP1-TAP2). A component of the peptide loading complex (PLC), interacts via TAPBP with MHCI heterodimer; this interaction mediates peptide-MHCI assembly. Recruits TAPBP in a 1:1 stoichiometry. Interacts with classical MHCI such as HLA-A*02-B2M; this interaction is obligatory for the loading of peptide epitopes. Interacts with non-classical MHCI molecules including HLA-E-B2M and HLA-F-B2M as well as PLC component CALR before the peptide loading. Interacts with PSMB5 and PSMB8. (Microbial infection) Interacts with Epstein-Barr virus BNLF2a. As to quaternary structure, (Microbial infection) Interacts with herpes simplex virus US12/ICP47. In terms of assembly, (Microbial infection) Interacts with adenovirus E3-19K glycoprotein, which binds TAP1-TAP2 and acts as a TAPBP inhibitor, preventing TAP1-TAP2 association with MHCI. The cofactor is Mg(2+). In terms of tissue distribution, highly expressed in professional APCs monocytes and dendritic cells as well as in lymphocyte subsets T cells, B cells and NK cells.

Its subcellular location is the endoplasmic reticulum membrane. The enzyme catalyses a peptide antigen(in) + ATP + H2O = a peptide antigen(out) + ADP + phosphate + H(+). With respect to regulation, inhibited at high ER lumenal peptide concentrations. (Microbial infection) Inhibited by herpes simplex virus US12/ICP47 protein, which blocks the peptide-binding site of TAP1-TAP2. Its activity is regulated as follows. (Microbial infection) Inhibited by human cytomegalovirus US6 glycoprotein, which binds to the lumenal side of TAP1-TAP2 complex and inhibits peptide translocation by specifically blocking ATP-binding and preventing TAP1-TAP2 conformational rearrangement induced by peptide binding. ABC transporter associated with antigen processing. In complex with TAP2 mediates unidirectional translocation of peptide antigens from cytosol to endoplasmic reticulum (ER) for loading onto MHC class I (MHCI) molecules. Uses the chemical energy of ATP to export peptides against the concentration gradient. During the transport cycle alternates between 'inward-facing' state with peptide binding site facing the cytosol to 'outward-facing' state with peptide binding site facing the ER lumen. Peptide antigen binding to ATP-loaded TAP1-TAP2 induces a switch to hydrolysis-competent 'outward-facing' conformation ready for peptide loading onto nascent MHCI molecules. Subsequently ATP hydrolysis resets the transporter to the 'inward facing' state for a new cycle. Typically transports intracellular peptide antigens of 8 to 13 amino acids that arise from cytosolic proteolysis via IFNG-induced immunoproteasome. Binds peptides with free N- and C-termini, the first three and the C-terminal residues being critical. Preferentially selects peptides having a highly hydrophobic residue at position 3 and hydrophobic or charged residues at the C-terminal anchor. Proline at position 2 has the most destabilizing effect. As a component of the peptide loading complex (PLC), acts as a molecular scaffold essential for peptide-MHCI assembly and antigen presentation. The polypeptide is Antigen peptide transporter 1 (Homo sapiens (Human)).